The following is a 307-amino-acid chain: MILLSYLLTYLLCALTCSARAIHNGRSLIPRAGSLEQVTDFGDNPSNVKMYIYVPTNLASNPGIIVAIHYCTGTAQAYYQGSPYAQLAETHGFIVIYPESPYEGTCWDVSSQATLTHNGGGNSNSIANMVTWTTKQYNADSSKVFVTGTSSGAMMTNVMAATYPNLFAAGVAYAGVPAGCFLSTADQPDAWNSTCAQGQSITTPEHWASIAEAMYPDYSGSRPKMQIYHGNVDTTLYPQNYEETCKQWAGVFGYNYDAPESTESNTPEANWSRTTWGPNLQGILAGGVGHNIQIHGDEDMKWFGFTN.

Positions 1–19 are cleaved as a signal peptide; that stretch reads MILLSYLLTYLLCALTCSA. Serine 150 serves as the catalytic Charge relay system. N-linked (GlcNAc...) asparagine glycans are attached at residues asparagine 192 and asparagine 270.

The protein belongs to the carbohydrate esterase 1 (CE1) family. AxeA subfamily. Monomer.

It localises to the secreted. The enzyme catalyses Deacetylation of xylans and xylo-oligosaccharides.. It functions in the pathway glycan degradation; xylan degradation. In terms of biological role, acetylxylan esterase involved in the hydrolysis of xylan, a major structural heterogeneous polysaccharide found in plant biomass representing the second most abundant polysaccharide in the biosphere, after cellulose. Degrades acetylated xylans by cleaving acetyl side groups from the hetero-xylan backbone. This is Probable acetylxylan esterase A (axeA) from Aspergillus flavus.